Reading from the N-terminus, the 578-residue chain is Cytochrome P450 monooxygenase fsoE (578 aa).

The helical transmembrane segment at 28–48 (LLMAVAITYAISWINWFFTSW) threads the bilayer. Cysteine 517 lines the heme pocket.

This sequence belongs to the cytochrome P450 family. Heme serves as cofactor.

The protein localises to the membrane. It catalyses the reaction 3-O-(beta-D-glucopyranosyl)-isomotiol + 2 reduced [NADPH--hemoprotein reductase] + 2 O2 = 2-deacetoxyfuscoatroside + 2 oxidized [NADPH--hemoprotein reductase] + 2 H2O + 3 H(+). The catalysed reaction is 3-O-(beta-D-glucopyranosyl)-2alpha-hydroxyisomotiol + 2 reduced [NADPH--hemoprotein reductase] + 2 O2 = 2-deacetylfuscoatroside + 2 oxidized [NADPH--hemoprotein reductase] + 2 H2O + 3 H(+). It carries out the reaction 3-O-(beta-D-glucopyranosyl)-2alpha-acetoxyisomotiol + 2 reduced [NADPH--hemoprotein reductase] + 2 O2 = fuscoatroside + 2 oxidized [NADPH--hemoprotein reductase] + 2 H2O + 3 H(+). The enzyme catalyses isomotiol + reduced [NADPH--hemoprotein reductase] + O2 = 19beta-hydroxyisomotiol + oxidized [NADPH--hemoprotein reductase] + H2O + H(+). It catalyses the reaction 2alpha-hydroxyisomotiol + reduced [NADPH--hemoprotein reductase] + O2 = 2alpha,19beta-dihydroxyisomotiol + oxidized [NADPH--hemoprotein reductase] + H2O + H(+). The catalysed reaction is 2alpha,19beta-dihydroxyisomotiol + reduced [NADPH--hemoprotein reductase] + O2 = 2alpha-hydroxyismotiol-19-one + oxidized [NADPH--hemoprotein reductase] + 2 H2O + H(+). It carries out the reaction 2alpha-hydroxyismotiol-19-one + 2 reduced [NADPH--hemoprotein reductase] + O2 = 2-deacetyl,3-deglucopyranosyl-fuscoatroside + 2 oxidized [NADPH--hemoprotein reductase] + H2O + 3 H(+). It participates in secondary metabolite biosynthesis; terpenoid biosynthesis. In terms of biological role, cytochrome P450 monooxygenase; part of the gene cluster that mediates the biosynthesis of the enfumafungin-type antibiotic, fuscoatroside. Within the pathway, fsoE catalyzes the oxidative cleavage of the c19-C20 bond within the E-ring, resulting in the formation of a carboxyl group and a methyl group. FsoE exhibits preferential substrate selectivity toward glycoside substrates over their aglycones. The fuscoatroside biosynthesis is initiated by the cyclization of 2,3(S)-oxidosqualene through FsoA's terpene cyclase (TC) domain, leading to the formation of the fernane skeleton isomotiol, harboring a fernane triterpene skeleton with a C8-C9 double bond. Subsequently, C2-alpha-hydroxylation mediated by fsoD results in the production of 2-alpha-hydroxy-isomotiol, which is further acetylated by fsoF. The glycosyltransferase (GT) domain of FsoA may convert isomotiol, 2-alpha-hydroxy-isomotiol, and the acetylated derivative of 2-alpha-hydroxy-isomotiol into their corresponding glycosides 3-O-(beta-D-glucopyranosyl)-isomotiol, 3-O-(beta-D-glucopyranosyl)-2-alpha-hydroxy-isomotiol, and 3-O-(beta-D-glucopyranosyl)-2-alpha-acetoxy-isomotiol, which then undergo oxidative cleavage under the action of fsoE to form s 2-deacetoxy-fuscoatroside, 2-deacetyl-fuscoatroside, and fuscoatroside, respectively. Although hydroxylation followed by acetylation of 3-O-(beta-D-glucopyranosyl)-isomotiol and 2-deacetoxy-fuscoatroside by fsoD and fsoF could not be ruled out, this process is likely to occur with difficulty due to bulky steric hindrance caused by the presence of a glycan at C3 in these compounds. Interestingly, fsoE can also utilize the aglycones isomotiol and 2-alpha-hydroxy-isomotiol as substrates to generate 19-beta-hydroxy-isomotiol and 2-alpha,19-beta-dihydroxy-isomotiol, respectively. These reactions occur with lower efficiency. Finally, fsoE can further convert 2-alpha,19-beta-dihydroxy-isomotiol into 2-alpha-hydroxy-ismotiol-19-one and 2-alpha-hydroxy-ismotiol-19-one into 2-deacetyl-3-deglucopyranosyl-fuscoatroside. This is Cytochrome P450 monooxygenase fsoE from Humicola fuscoatra.